The chain runs to 276 residues: Probable endonuclease 4 (276 aa).

Zn(2+) contacts are provided by His70, His108, Glu143, Asp176, His179, His210, Asp223, His225, and Glu255.

Belongs to the AP endonuclease 2 family. It depends on Zn(2+) as a cofactor.

The enzyme catalyses Endonucleolytic cleavage to 5'-phosphooligonucleotide end-products.. Endonuclease IV plays a role in DNA repair. It cleaves phosphodiester bonds at apurinic or apyrimidinic (AP) sites, generating a 3'-hydroxyl group and a 5'-terminal sugar phosphate. This is Probable endonuclease 4 from Mesomycoplasma hyopneumoniae (strain J / ATCC 25934 / NCTC 10110) (Mycoplasma hyopneumoniae).